Reading from the N-terminus, the 226-residue chain is Ribonuclease 3 (226 aa).

The region spanning 6-128 is the RNase III domain; the sequence is INRLQRKLGY…LIGGVFLDSN (123 aa). Mg(2+) is bound at residue Glu-41. Asp-45 is an active-site residue. Mg(2+)-binding residues include Asp-114 and Glu-117. Glu-117 is a catalytic residue. One can recognise a DRBM domain in the interval 155–225; sequence DPKTRLQEYL…AEQALKKLEL (71 aa).

This sequence belongs to the ribonuclease III family. As to quaternary structure, homodimer. Requires Mg(2+) as cofactor.

The protein resides in the cytoplasm. It catalyses the reaction Endonucleolytic cleavage to 5'-phosphomonoester.. Its function is as follows. Digests double-stranded RNA. Involved in the processing of primary rRNA transcript to yield the immediate precursors to the large and small rRNAs (23S and 16S). Processes some mRNAs, and tRNAs when they are encoded in the rRNA operon. Processes pre-crRNA and tracrRNA of type II CRISPR loci if present in the organism. The protein is Ribonuclease 3 of Salmonella enteritidis PT4 (strain P125109).